Reading from the N-terminus, the 211-residue chain is LexA repressor (211 aa).

The H-T-H motif DNA-binding region spans 28 to 48 (VREVGEAVGLSSSSTIHGHIE). Active-site for autocatalytic cleavage activity residues include serine 132 and lysine 170.

It belongs to the peptidase S24 family. As to quaternary structure, homodimer.

It carries out the reaction Hydrolysis of Ala-|-Gly bond in repressor LexA.. Functionally, represses a number of genes involved in the response to DNA damage (SOS response), including recA and lexA. In the presence of single-stranded DNA, RecA interacts with LexA causing an autocatalytic cleavage which disrupts the DNA-binding part of LexA, leading to derepression of the SOS regulon and eventually DNA repair. This Leuconostoc citreum (strain KM20) protein is LexA repressor.